Consider the following 135-residue polypeptide: UPF0216 protein MTH_949 (135 aa).

Belongs to the UPF0216 family.

This Methanothermobacter thermautotrophicus (strain ATCC 29096 / DSM 1053 / JCM 10044 / NBRC 100330 / Delta H) (Methanobacterium thermoautotrophicum) protein is UPF0216 protein MTH_949.